Here is a 206-residue protein sequence, read N- to C-terminus: Large ribosomal subunit protein uL4 (206 aa).

A disordered region spans residues 43-78 (ARSGNRKQKDREEVKHTTKKPWRQKGTGRARAGMSS). The segment covering 49 to 58 (KQKDREEVKH) has biased composition (basic and acidic residues). Positions 59–70 (TTKKPWRQKGTG) are enriched in basic residues.

It belongs to the universal ribosomal protein uL4 family. Part of the 50S ribosomal subunit.

One of the primary rRNA binding proteins, this protein initially binds near the 5'-end of the 23S rRNA. It is important during the early stages of 50S assembly. It makes multiple contacts with different domains of the 23S rRNA in the assembled 50S subunit and ribosome. Its function is as follows. Forms part of the polypeptide exit tunnel. This is Large ribosomal subunit protein uL4 from Ralstonia pickettii (strain 12J).